The primary structure comprises 248 residues: Phycocyanobilin:ferredoxin oxidoreductase (248 aa).

It belongs to the HY2 family.

The enzyme catalyses (2R,3Z)-phycocyanobilin + 4 oxidized [2Fe-2S]-[ferredoxin] = biliverdin IXalpha + 4 reduced [2Fe-2S]-[ferredoxin] + 4 H(+). Functionally, catalyzes the four-electron reduction of biliverdin IX-alpha (2-electron reduction at both the A and D rings); the reaction proceeds via an isolatable 2-electron intermediate, 181,182-dihydrobiliverdin. This chain is Phycocyanobilin:ferredoxin oxidoreductase (pcyA), found in Synechococcus elongatus (strain ATCC 33912 / PCC 7942 / FACHB-805) (Anacystis nidulans R2).